Consider the following 1042-residue polypeptide: Glutamate dehydrogenase 2 (1042 aa).

Residue lysine 596 is part of the active site. Arginine 763 carries the ADP-ribosylarginine; by Legionella Lart1 modification.

The protein belongs to the Glu/Leu/Phe/Val dehydrogenases family. Homodimer. In terms of processing, (Microbial infection) ADP-ribosylated at Arg-763 by the Legionella pneumophila effector Lart1, which inhibits the glutamate dehydrogenase activity. Amoeba are natural hosts of Legionella, and ADP-ribosylation by Lart1 may promote Legionella parasitism.

The protein resides in the cytoplasm. The catalysed reaction is L-glutamate + NAD(+) + H2O = 2-oxoglutarate + NH4(+) + NADH + H(+). With respect to regulation, activity is stimulated by AMP. (Microbial infection) Inhibited by ADP-ribosylation. The chain is Glutamate dehydrogenase 2 (glud2) from Dictyostelium discoideum (Social amoeba).